The sequence spans 476 residues: MADRWNAGVIPYAEMGYWQPDYEPKDTDILCAFRITPQDGVPPEEAGAAVAGESSTATWTVVWTDRLTTFEHYQAKCYKVDPVPNTPGQWIAYIAYDIDLFEEASIANLTSSIIGNVFGFKPLKALRLEDMRIPTHYVKTFQGPAHGIVMEREHLGKFGRPILGATTKPKLGLSARNYGRVVYEALRGGLDFTKDDENINSQPFMRWRDRFLFCMEAVNRAQAATGEIKGHYLNVTAGTMEEMYERANFAAELGSVIVMIDLTIGYTAIQSMAKWARDNNVILHLHRAGHGTYTRQKNHGVSFRVISKWMRLAGVDHIHAGTVVGKLEGDPMTTAGFYDTLRKDSIKADLSKGLYFDQEWASMPGVMPVASGGIHAGQMHQLIHYLGEDVILQFGGGTIGHPMGIAAGAEANRVALEAMIKARNEGVDYYKEGPEILKKAASRNRALDTALATWGDITFNYESTDTPDVVATPTNA.

Positions 116 and 166 each coordinate substrate. K168 (proton acceptor) is an active-site residue. K170 lines the substrate pocket. The Mg(2+) site is built by K194, D196, and E197. At K194 the chain carries N6-carboxylysine. The active-site Proton acceptor is H286. Substrate contacts are provided by R287, H319, and S371.

Belongs to the RuBisCO large chain family. Type I subfamily. As to quaternary structure, heterohexadecamer of 8 large chains and 8 small chains. Mg(2+) is required as a cofactor.

The catalysed reaction is 2 (2R)-3-phosphoglycerate + 2 H(+) = D-ribulose 1,5-bisphosphate + CO2 + H2O. The enzyme catalyses D-ribulose 1,5-bisphosphate + O2 = 2-phosphoglycolate + (2R)-3-phosphoglycerate + 2 H(+). Its function is as follows. RuBisCO catalyzes two reactions: the carboxylation of D-ribulose 1,5-bisphosphate, the primary event in carbon dioxide fixation, as well as the oxidative fragmentation of the pentose substrate. Both reactions occur simultaneously and in competition at the same active site. The polypeptide is Ribulose bisphosphate carboxylase large chain (Pseudonocardia dioxanivorans (strain ATCC 55486 / DSM 44775 / JCM 13855 / CB1190)).